Reading from the N-terminus, the 441-residue chain is 5-hydroxytryptamine receptor 3B (441 aa).

The first 21 residues, M1–A21, serve as a signal peptide directing secretion. Over T22 to H238 the chain is Extracellular. N-linked (GlcNAc...) asparagine glycans are attached at residues N52, N96, N138, N168, and N203. C155 and C169 are disulfide-bonded. A helical transmembrane segment spans residues P239–G259. Over S260 to R268 the chain is Cytoplasmic. The chain crosses the membrane as a helical span at residues A269–V286. N-linked (GlcNAc...) asparagine glycosylation occurs at N287. The Extracellular portion of the chain corresponds to N287–G303. The chain crosses the membrane as a helical span at residues H304 to V324. The Cytoplasmic segment spans residues K325–R414. The segment at V381–D413 is HA-stretch; determines single-channel conductance in 5-HT3 receptors. Residues L415–W435 form a helical membrane-spanning segment. Over A436–V441 the chain is Extracellular.

Belongs to the ligand-gated ion channel (TC 1.A.9) family. 5-hydroxytryptamine receptor (TC 1.A.9.2) subfamily. HTR3B sub-subfamily. As to quaternary structure, forms homopentameric as well as heteropentameric serotonin-activated cation-selective channel complexes with HTR3A. The homomeric complex is not functional. Heteropentameric complexes display properties which resemble that of neuronal serotonin-activated channels in vivo. N-glycosylation required for membrane localization. In terms of tissue distribution, expressed in the brain cortex, in the caudate nucleus, the hippocampus, the thalamus and the amygdala. Detected in the kidney and testis as well as in monocytes of the spleen, small and large intestine, uterus, prostate, ovary and placenta.

The protein resides in the postsynaptic cell membrane. It localises to the cell membrane. The catalysed reaction is Na(+)(in) = Na(+)(out). It carries out the reaction K(+)(in) = K(+)(out). It catalyses the reaction Ca(2+)(in) = Ca(2+)(out). Forms serotonin (5-hydroxytryptamine/5-HT3)-activated cation-selective channel complexes, which when activated cause fast, depolarizing responses in neurons. This chain is 5-hydroxytryptamine receptor 3B, found in Homo sapiens (Human).